The primary structure comprises 88 residues: Small ribosomal subunit protein uS17 (88 aa).

The protein belongs to the universal ribosomal protein uS17 family. Part of the 30S ribosomal subunit.

One of the primary rRNA binding proteins, it binds specifically to the 5'-end of 16S ribosomal RNA. In Lawsonia intracellularis (strain PHE/MN1-00), this protein is Small ribosomal subunit protein uS17.